A 197-amino-acid chain; its full sequence is Imidazoleglycerol-phosphate dehydratase (197 aa).

This sequence belongs to the imidazoleglycerol-phosphate dehydratase family.

Its subcellular location is the cytoplasm. The enzyme catalyses D-erythro-1-(imidazol-4-yl)glycerol 3-phosphate = 3-(imidazol-4-yl)-2-oxopropyl phosphate + H2O. The protein operates within amino-acid biosynthesis; L-histidine biosynthesis; L-histidine from 5-phospho-alpha-D-ribose 1-diphosphate: step 6/9. The protein is Imidazoleglycerol-phosphate dehydratase of Pseudomonas putida (strain GB-1).